A 131-amino-acid chain; its full sequence is Methylglyoxal synthase (131 aa).

The 131-residue stretch at 1–131 (MKIALIAHDK…GDLDYRKLRK (131 aa)) folds into the MGS-like domain. Residues H8, K12, 34 to 37 (TGTT), and 54 to 55 (SG) each bind substrate. D60 (proton donor/acceptor) is an active-site residue. A substrate-binding site is contributed by H87.

The protein belongs to the methylglyoxal synthase family.

It catalyses the reaction dihydroxyacetone phosphate = methylglyoxal + phosphate. Catalyzes the formation of methylglyoxal from dihydroxyacetone phosphate. This chain is Methylglyoxal synthase, found in Bacillus mycoides (strain KBAB4) (Bacillus weihenstephanensis).